Here is a 2319-residue protein sequence, read N- to C-terminus: Coagulation factor VIII (2319 aa).

Positions 1–19 (MQIALFACFFLSLFNFCSS) are cleaved as a signal peptide. Plastocyanin-like domains lie at 20 to 199 (AIRR…LLVC) and 207 to 349 (ERTQ…VDSC). The region spanning 20-349 (AIRRYYLGAV…MEAYVKVDSC (330 aa)) is the F5/8 type A 1 domain. Residue N61 is glycosylated (N-linked (GlcNAc...) asparagine). C173 and C199 are joined by a disulfide. N-linked (GlcNAc...) asparagine glycans are attached at residues N233 and N259. Y367 is modified (sulfotyrosine). 2 Plastocyanin-like domains span residues 399–573 (KTWI…LLIC) and 583–730 (NQMM…VSSC). Positions 399–730 (KTWIHYISAE…MTALLKVSSC (332 aa)) constitute an F5/8 type A 2 domain. Residue N423 is glycosylated (N-linked (GlcNAc...) asparagine). A disulfide bridge links C547 with C573. N601 carries N-linked (GlcNAc...) asparagine glycosylation. Sulfotyrosine is present on residues Y737, Y738, and Y742. The interval 760–1640 (SFFQNTNHPN…IPPVLKRHQR (881 aa)) is b. N880, N958, N1015, N1022, N1026, N1044, N1076, N1087, N1136, N1161, N1192, N1255, N1268, N1273, N1274, N1302, N1316, N1340, and N1378 each carry an N-linked (GlcNAc...) asparagine glycan. Residues 1530 to 1549 (WNKAKRHGESIKGKTESSKN) form a disordered region. Residues 1536 to 1548 (HGESIKGKTESSK) show a composition bias toward basic and acidic residues. A sulfotyrosine mark is found at Y1669 and Y1687. 2 Plastocyanin-like domains span residues 1683 to 1845 (KTRH…LLIC) and 1855 to 2008 (GRQV…SKQC). The 326-residue stretch at 1683–2008 (KTRHYFIAAV…TLFLVYSKQC (326 aa)) folds into the F5/8 type A 3 domain. N1797 carries N-linked (GlcNAc...) asparagine glycosylation. Cystine bridges form between C1819-C1845, C2008-C2156, and C2161-C2313. F5/8 type C domains lie at 2008-2156 (CQIP…LMGC) and 2161-2313 (CSIP…ILGC). N-linked (GlcNAc...) asparagine glycosylation occurs at N2105.

Belongs to the multicopper oxidase family. In terms of assembly, interacts with vWF. vWF binding is essential for the stabilization of F8 in circulation. The binding of vWF and activation depend on the sulfation of Tyr-1669. Post-translationally, proteolytically cleaved by cathepsin CTSG to produce a partially activated form. As to expression, found in most tissues.

It is found in the secreted. It localises to the extracellular space. Factor VIII, along with calcium and phospholipid, acts as a cofactor for factor IXa when it converts factor X to the activated form, factor Xa. In Mus musculus (Mouse), this protein is Coagulation factor VIII (F8).